A 286-amino-acid chain; its full sequence is MANLKEIRNRITSVSSTMQITSAMKMVSAAKLKKAQDAITAMRPYAEKLTELLQNLSATLDGDAGGEFTKQREIKKVLVVAITSNRGLCGAFNTNVIKEVKNRADFYAGKQVDVFAIGKKGNDVLSKTLSVIDNQSSVFDALTFDNVAKIAQMLTDKFVAGEYDRIEVIYNQFKNAATQIVQTEQFLPLAPIKSDLPVSTGDYIFEPSKEEIVLTLIPKSLKTQLYKGIRDSFASEHGARMTAMHKATDNATELRDQLKLTYNKARQAAITNEILEIVGGAEALKG.

Belongs to the ATPase gamma chain family. F-type ATPases have 2 components, CF(1) - the catalytic core - and CF(0) - the membrane proton channel. CF(1) has five subunits: alpha(3), beta(3), gamma(1), delta(1), epsilon(1). CF(0) has three main subunits: a, b and c.

The protein resides in the cell inner membrane. Produces ATP from ADP in the presence of a proton gradient across the membrane. The gamma chain is believed to be important in regulating ATPase activity and the flow of protons through the CF(0) complex. The chain is ATP synthase gamma chain from Flavobacterium psychrophilum (strain ATCC 49511 / DSM 21280 / CIP 103535 / JIP02/86).